A 564-amino-acid chain; its full sequence is MDFGSLETVVANSAFIAARGSFDGSSTPSSRDKKYLAKLRLPPLSKCEGLRDSISLEFDNLCSEQPIGKRLFQQFLKTDERHVPALELWKDIEDYDTADDDLRPQKAQAILAEYLDPQGTLFCNFLDQGMVARVKEGPTGSQDGLFQPLLQATLEHLSQGPFQEYLGSLYFLRFLQWKWLEAQPIGEDWFLDFRVLGKGGFGEVSACQMKATGKMYACKKLNKKRLKKRKGYQGAIVEKRILAKVHSRFIVSLAYAFETKTDLCLVMTIMNGGDVRYHIYNVDEENPGFPEPRAIYYTAQIISGLEHLHQRRIVYRDLKPENVLLDNDGNIRISDLGLAVELKEGQNKTKGYAGTPGFMAPELLRGEEYDFSVDYFALGVTLYEMIAARGPFRARGEKVENKELKQRIISEPVKYPEKFSQASKDFCEQLLEKDPEKRLGFRDGTCDALRANVLFKDISWRQLEAGMLIPPFIPDSRTVYAKNIQDVGAFSTVKGVVFDKADTEFFQEFASGNCSIPWQEEMIETGFFGDLNVWRPDGQMPDDMKGITVEEAAPTAKSGMCLIS.

The interaction with RCVRN stretch occupies residues 1-15; sequence MDFGSLETVVANSAF. Residues 1–189 are N-terminal; sequence MDFGSLETVV…LEAQPIGEDW (189 aa). Phosphoserine is present on S5. Position 8 is a phosphothreonine (T8). S21 carries the phosphoserine; by PKA and autocatalysis modification. In terms of domain architecture, RGS spans 58–175; that stretch reads FDNLCSEQPI…LGSLYFLRFL (118 aa). The Protein kinase domain maps to 190 to 455; it reads FLDFRVLGKG…CDALRANVLF (266 aa). ATP contacts are provided by residues 196-204 and K219; that span reads LGKGGFGEV. D317 acts as the Proton acceptor in catalysis. In terms of domain architecture, AGC-kinase C-terminal spans 456-521; it reads KDISWRQLEA…GNCSIPWQEE (66 aa). Residues 456-564 form a C-terminal region; sequence KDISWRQLEA…TAKSGMCLIS (109 aa). S491 bears the Phosphoserine; by autocatalysis mark. Residue T492 is modified to Phosphothreonine; by autocatalysis. C561 bears the Cysteine methyl ester mark. The S-farnesyl cysteine moiety is linked to residue C561. Residues 562 to 564 constitute a propeptide, removed in mature form; the sequence is LIS.

The protein belongs to the protein kinase superfamily. AGC Ser/Thr protein kinase family. GPRK subfamily. Interacts (via N-terminus) with RCVRN (via C-terminus); the interaction is Ca(2+)-dependent. Interacts (when prenylated) with PDE6D; this promotes release from membranes. May form a complex composed of RHO, GRK1 and RCVRN in a Ca(2+)-dependent manner; RCVRN prevents the interaction between GRK1 and RHO. Post-translationally, autophosphorylated, Ser-21 is a minor site of autophosphorylation compared to Ser-491 and Thr-492. Phosphorylation at Ser-21 is regulated by light and activated by cAMP. In terms of processing, farnesylation is required for full activity. As to expression, detected in retina (at protein level). Retina-specific. Expressed in rod and cone photoreceptor cells.

The protein resides in the membrane. It is found in the cell projection. The protein localises to the cilium. It localises to the photoreceptor outer segment. It carries out the reaction L-threonyl-[rhodopsin] + ATP = O-phospho-L-threonyl-[rhodopsin] + ADP + H(+). The catalysed reaction is L-seryl-[rhodopsin] + ATP = O-phospho-L-seryl-[rhodopsin] + ADP + H(+). With respect to regulation, inhibited by RCVRN, which prevents the interaction between GRK1 and RHO. Inhibition is calcium-dependent. Its function is as follows. Retina-specific kinase involved in the signal turnoff via phosphorylation of rhodopsin (RHO), the G protein- coupled receptor that initiates the phototransduction cascade. This rapid desensitization is essential for scotopic vision and permits rapid adaptation to changes in illumination. May play a role in the maintenance of the outer nuclear layer in the retina. In Rattus norvegicus (Rat), this protein is Rhodopsin kinase GRK1.